Reading from the N-terminus, the 382-residue chain is Chaperone protein DnaJ (382 aa).

The region spanning 5-70 is the J domain; the sequence is DYYDLLGLSK…DKRAAYDRYG (66 aa). Residues 138–216 form a CR-type zinc finger; that stretch reads GTKVPINYVT…CSGSGRVRDE (79 aa). 8 residues coordinate Zn(2+): cysteine 151, cysteine 154, cysteine 168, cysteine 171, cysteine 190, cysteine 193, cysteine 204, and cysteine 207. 4 CXXCXGXG motif repeats span residues 151 to 158, 168 to 175, 190 to 197, and 204 to 211; these read CSSCSGSG, CNTCHGAG, CHVCNGEG, and CKKCSGSG.

Belongs to the DnaJ family. Homodimer. Zn(2+) is required as a cofactor.

It localises to the cytoplasm. Its function is as follows. Participates actively in the response to hyperosmotic and heat shock by preventing the aggregation of stress-denatured proteins and by disaggregating proteins, also in an autonomous, DnaK-independent fashion. Unfolded proteins bind initially to DnaJ; upon interaction with the DnaJ-bound protein, DnaK hydrolyzes its bound ATP, resulting in the formation of a stable complex. GrpE releases ADP from DnaK; ATP binding to DnaK triggers the release of the substrate protein, thus completing the reaction cycle. Several rounds of ATP-dependent interactions between DnaJ, DnaK and GrpE are required for fully efficient folding. Also involved, together with DnaK and GrpE, in the DNA replication of plasmids through activation of initiation proteins. This is Chaperone protein DnaJ from Ehrlichia ruminantium (strain Welgevonden).